The primary structure comprises 228 residues: 7-cyano-7-deazaguanine synthase (228 aa).

11-21 (LSGGLDSATVL) serves as a coordination point for ATP. Positions 191, 201, 204, and 207 each coordinate Zn(2+).

This sequence belongs to the QueC family. Zn(2+) is required as a cofactor.

The catalysed reaction is 7-carboxy-7-deazaguanine + NH4(+) + ATP = 7-cyano-7-deazaguanine + ADP + phosphate + H2O + H(+). Its pathway is purine metabolism; 7-cyano-7-deazaguanine biosynthesis. Catalyzes the ATP-dependent conversion of 7-carboxy-7-deazaguanine (CDG) to 7-cyano-7-deazaguanine (preQ(0)). This chain is 7-cyano-7-deazaguanine synthase, found in Magnetococcus marinus (strain ATCC BAA-1437 / JCM 17883 / MC-1).